We begin with the raw amino-acid sequence, 1317 residues long: Putative late blight resistance protein homolog R1B-14 (1317 aa).

2 coiled-coil regions span residues 419–442 and 535–556; these read RYSD…ESLQ and RMNE…RLLN. Residues 521–823 enclose the NB-ARC domain; sequence TVITHTSSQL…SESFIKSSEG (303 aa). ATP is bound at residue 568 to 575; that stretch reads GMPGLGKT. LRR repeat units follow at residues 944–968, 987–1015, 1090–1114, 1138–1161, 1164–1186, and 1187–1211; these read FKFL…LFYL, LWNL…IWDM, PIRL…ISAP, LKHL…KVSN, FPQL…ADDA, and FPNL…FMDI. The HMA domain maps to 1251–1317; sequence IKKMVLKFDI…VSKLRKRGML (67 aa).

This sequence belongs to the disease resistance NB-LRR family.

The protein resides in the cytoplasm. The protein localises to the membrane. Confers resistance to late blight (Phytophthora infestans) races carrying the avirulence gene Avr1. Resistance proteins guard the plant against pathogens that contain an appropriate avirulence protein via an indirect interaction with this avirulence protein. That triggers a defense system including the hypersensitive response, which restricts the pathogen growth. This is Putative late blight resistance protein homolog R1B-14 (R1B-14) from Solanum demissum (Wild potato).